We begin with the raw amino-acid sequence, 34 residues long: MSDIN-like toxin proprotein 4 (34 aa).

A propeptide spanning residues 1–10 is cleaved from the precursor; it reads MSDINATRLP. A cross-link (cyclopeptide (Val-Pro)) is located at residues 11–17; it reads VWIGYSP. The propeptide occupies 18–34; sequence CVGDDCIALLTRGEGLC.

The protein belongs to the MSDIN fungal toxin family. Post-translationally, processed by the macrocyclase-peptidase enzyme POPB to yield a toxic cyclic heptapeptide. POPB first removes 10 residues from the N-terminus. Conformational trapping of the remaining peptide forces the enzyme to release this intermediate rather than proceed to macrocyclization. The enzyme rebinds the remaining peptide in a different conformation and catalyzes macrocyclization of the N-terminal 7 residues. As to expression, expressed in basidiocarps.

Probable toxin that belongs to the MSDIN-like toxin family responsible for a large number of food poisoning cases and deaths. This chain is MSDIN-like toxin proprotein 4, found in Amanita exitialis (Guangzhou destroying angel).